The following is an 81-amino-acid chain: Costars family protein ABRACL (81 aa).

Belongs to the costars family.

The polypeptide is Costars family protein ABRACL (abracl) (Danio rerio (Zebrafish)).